The chain runs to 29 residues: Photosystem I reaction center subunit XII (29 aa).

The helical transmembrane segment at 7–26 (IFVALILALFSFVLAIRLGT) threads the bilayer.

The protein belongs to the PsaM family.

The protein localises to the plastid. It localises to the chloroplast thylakoid membrane. This Guillardia theta (Cryptophyte) protein is Photosystem I reaction center subunit XII.